Here is a 738-residue protein sequence, read N- to C-terminus: Catalase-peroxidase (738 aa).

Positions methionine 1–proline 13 are enriched in gly residues. The disordered stretch occupies residues methionine 1–asparagine 26. Positions tryptophan 98–tyrosine 226 form a cross-link, tryptophyl-tyrosyl-methioninium (Trp-Tyr) (with M-252). Residue histidine 99 is the Proton acceptor of the active site. The segment at residues tyrosine 226–methionine 252 is a cross-link (tryptophyl-tyrosyl-methioninium (Tyr-Met) (with W-98)). Residue histidine 267 coordinates heme b.

This sequence belongs to the peroxidase family. Peroxidase/catalase subfamily. Homodimer or homotetramer. The cofactor is heme b. Formation of the three residue Trp-Tyr-Met cross-link is important for the catalase, but not the peroxidase activity of the enzyme.

It catalyses the reaction H2O2 + AH2 = A + 2 H2O. It carries out the reaction 2 H2O2 = O2 + 2 H2O. Bifunctional enzyme with both catalase and broad-spectrum peroxidase activity. This is Catalase-peroxidase from Ruegeria sp. (strain TM1040) (Silicibacter sp.).